The chain runs to 156 residues: Small ribosomal subunit protein uS7 (156 aa).

It belongs to the universal ribosomal protein uS7 family. As to quaternary structure, part of the 30S ribosomal subunit. Contacts proteins S9 and S11.

Its function is as follows. One of the primary rRNA binding proteins, it binds directly to 16S rRNA where it nucleates assembly of the head domain of the 30S subunit. Is located at the subunit interface close to the decoding center, probably blocks exit of the E-site tRNA. The chain is Small ribosomal subunit protein uS7 from Synechococcus sp. (strain CC9311).